A 437-amino-acid polypeptide reads, in one-letter code: Oxysterol-binding protein homolog 7 (437 aa).

Residues Ile23 to Pro32 show a composition bias toward polar residues. Residues Ile23–Glu42 are disordered. Residues Ile54–His393 form an OSBP-related domain (ORD) region. Residues Leu64–Leu69, Lys126–Asn129, and His157–His158 each bind a 1,2-diacyl-sn-glycero-3-phospho-(1D-myo-inositol 4-phosphate). A 1,2-diacyl-sn-glycero-3-phospho-L-serine-binding positions include Leu64–Leu69 and Asn129. Position 183 (Ser183) interacts with a 1,2-diacyl-sn-glycero-3-phospho-L-serine. Lys276 participates in a covalent cross-link: Glycyl lysine isopeptide (Lys-Gly) (interchain with G-Cter in ubiquitin). Residues Lys351, Glu355, and Arg359 each coordinate a 1,2-diacyl-sn-glycero-3-phospho-(1D-myo-inositol 4-phosphate).

This sequence belongs to the OSBP family. Interacts with the AAA ATPase VPS4; regulates OSH7 membrane association. VPS4 is required for membrane dissociation of OSH7.

It is found in the cytoplasm. Its subcellular location is the cell membrane. The protein localises to the endoplasmic reticulum membrane. The enzyme catalyses a 1,2-diacyl-sn-glycero-3-phospho-L-serine(in) = a 1,2-diacyl-sn-glycero-3-phospho-L-serine(out). Its function is as follows. ipid transport protein (LTP) involved in non-vesicular transfer of lipids between membranes. Functions in phosphoinositide-coupled directional transport of various lipids by carrying the lipid molecule in a hydrophobic pocket and transferring it between membranes through the cytosol. Involved in maintenance of intracellular sterol distribution and homeostasis. Involved in lipid countertransport between the endoplasmic reticulum and the plasma membrane. Specifically exchanges phosphatidylserine with phosphatidylinositol 4-phosphate (PI4P), delivering phosphatidylserine to the PM in exchange for PI4P, which is delivered to the ER-localized PI4P phosphatase SAC1 for degradation. Thus, by maintaining a PI4P gradient at the ER/PM interface, SAC1 drives PS transport. Binds phosphatidylserine and PI4P in a mutually exclusive manner. In Saccharomyces cerevisiae (strain ATCC 204508 / S288c) (Baker's yeast), this protein is Oxysterol-binding protein homolog 7.